A 1673-amino-acid polypeptide reads, in one-letter code: Protein TIC 214 (1673 aa).

Transmembrane regions (helical) follow at residues 32–52, 70–90, 93–113, 130–150, 170–190, and 218–238; these read AGLY…ILLI, LILG…YIAF, PYTL…GNNL, LEIL…TCIF, MVFL…VLMC, and FFLV…IQSL. Composition is skewed to basic and acidic residues over residues 264–276 and 283–298; these read LKKS…GKST and SHEK…SKLE. Disordered regions lie at residues 264–302, 547–611, 1120–1146, and 1370–1433; these read LKKS…NEDE, VVFD…YSIR, NKQS…TDNL, and QQNQ…SEDD. A compositionally biased stretch (polar residues) spans 562–586; the sequence is DNGNIQNNSSDKTINPQNNLTNLKP. Basic and acidic residues predominate over residues 597 to 611; it reads TTEKEPKDDKSYSIR. Polar residues predominate over residues 1120–1135; sequence NKQSLQKRNSSGNSNL. Positions 1370–1379 are enriched in low complexity; the sequence is QQNQTTTKMN. Basic and acidic residues-rich tracts occupy residues 1380-1399 and 1406-1423; these read TETK…KKTE and TKNK…KETE.

It belongs to the TIC214 family. As to quaternary structure, part of the Tic complex.

The protein resides in the plastid. It is found in the chloroplast inner membrane. Functionally, involved in protein precursor import into chloroplasts. May be part of an intermediate translocation complex acting as a protein-conducting channel at the inner envelope. The protein is Protein TIC 214 of Cuscuta gronovii (Common dodder).